Here is a 415-residue protein sequence, read N- to C-terminus: UV excision repair protein RAD23 homolog B (415 aa).

The 79-residue stretch at 1–79 (MQVTLKTLQQ…VVVMVTKPKA (79 aa)) folds into the Ubiquitin-like domain. Residues 80 to 175 (VTSAVPATTQ…STPGDSSRSN (96 aa)) are disordered. Positions 84–143 (VPATTQQSSSPSTTTVSSSPAAAVAQAPAPTPALAPTSTPASTTPASTTASSEPAPTGAT) are enriched in low complexity. Position 155 is a phosphothreonine (Thr-155). A phosphoserine mark is found at Ser-160 and Ser-174. Phosphothreonine is present on Thr-186. The UBA 1 domain maps to 188 to 228 (QSYENMVTEIMSMGYEREQVIAALRASFNNPDRAVEYLLMG). Residue Ser-199 is modified to Phosphoserine. Tyr-202 bears the Phosphotyrosine mark. Residues 274–317 (HPLEFLRNQPQFQQMRQIIQQNPSLLPALLQQIGRENPQLLQQI) enclose the STI1 domain. A disordered region spans residues 334–355 (EAGGQGGGGGGGGGGGGGGGGI). Over residues 336–355 (GGQGGGGGGGGGGGGGGGGI) the composition is skewed to gly residues. The UBA 2 domain occupies 370-410 (PQEKEAIERLKALGFPEGLVIQAYFACEKNENLAANFLLQQ).

It belongs to the RAD23 family. In terms of assembly, component of the XPC complex composed of XPC, RAD23B and CETN2. Interacts with NGLY1 and PSMC1. Interacts with ATXN3. Interacts with AMFR. Interacts with VCP; the interaction is indirect and mediated by NGLY1.

It is found in the nucleus. The protein localises to the cytoplasm. Its function is as follows. Multiubiquitin chain receptor involved in modulation of proteasomal degradation. Binds to polyubiquitin chains. Proposed to be capable to bind simultaneously to the 26S proteasome and to polyubiquitinated substrates and to deliver ubiquitinated proteins to the proteasome. May play a role in endoplasmic reticulum-associated degradation (ERAD) of misfolded glycoproteins by association with PNGase and delivering deglycosylated proteins to the proteasome. Involved in global genome nucleotide excision repair (GG-NER) by acting as component of the XPC complex. Cooperatively with Cetn2 appears to stabilize Xpc. May protect Xpc from proteasomal degradation. In terms of biological role, the XPC complex is proposed to represent the first factor bound at the sites of DNA damage and together with other core recognition factors, Xpa, RPA and the TFIIH complex, is part of the pre-incision (or initial recognition) complex. The XPC complex recognizes a wide spectrum of damaged DNA characterized by distortions of the DNA helix such as single-stranded loops, mismatched bubbles or single-stranded overhangs. The orientation of XPC complex binding appears to be crucial for inducing a productive NER. XPC complex is proposed to recognize and to interact with unpaired bases on the undamaged DNA strand which is followed by recruitment of the TFIIH complex and subsequent scanning for lesions in the opposite strand in a 5'-to-3' direction by the NER machinery. Cyclobutane pyrimidine dimers (CPDs) which are formed upon UV-induced DNA damage esacpe detection by the XPC complex due to a low degree of structural perurbation. Instead they are detected by the UV-DDB complex which in turn recruits and cooperates with the XPC complex in the respective DNA repair. In vitro, the XPC:RAD23B dimer is sufficient to initiate NER; it preferentially binds to cisplatin and UV-damaged double-stranded DNA and also binds to a variety of chemically and structurally diverse DNA adducts. XPC:RAD23B contacts DNA both 5' and 3' of a cisplatin lesion with a preference for the 5' side. Xpc:Rad22b induces a bend in DNA upon binding. Xpc:Rad23b stimulates the activity of DNA glycosylases Tdg and Smug1. The sequence is that of UV excision repair protein RAD23 homolog B (Rad23b) from Rattus norvegicus (Rat).